Here is a 379-residue protein sequence, read N- to C-terminus: Anhydro-N-acetylmuramic acid kinase (379 aa).

Position 9–16 (9–16 (GTSVDGID)) interacts with ATP.

Belongs to the anhydro-N-acetylmuramic acid kinase family.

It catalyses the reaction 1,6-anhydro-N-acetyl-beta-muramate + ATP + H2O = N-acetyl-D-muramate 6-phosphate + ADP + H(+). Its pathway is amino-sugar metabolism; 1,6-anhydro-N-acetylmuramate degradation. The protein operates within cell wall biogenesis; peptidoglycan recycling. Its function is as follows. Catalyzes the specific phosphorylation of 1,6-anhydro-N-acetylmuramic acid (anhMurNAc) with the simultaneous cleavage of the 1,6-anhydro ring, generating MurNAc-6-P. Is required for the utilization of anhMurNAc either imported from the medium or derived from its own cell wall murein, and thus plays a role in cell wall recycling. The protein is Anhydro-N-acetylmuramic acid kinase of Picosynechococcus sp. (strain ATCC 27264 / PCC 7002 / PR-6) (Agmenellum quadruplicatum).